Here is a 508-residue protein sequence, read N- to C-terminus: DNA-directed RNA polymerase subunit alpha (508 aa).

The alpha N-terminal domain (alpha-NTD) stretch occupies residues 1-380 (MKHILLSCVE…HLFSPFLQTH (380 aa)). The segment at 434 to 508 (NLVTAIQTLD…LKNFGVLPTS (75 aa)) is alpha C-terminal domain (alpha-CTD).

The protein belongs to the RNA polymerase alpha chain family. In terms of assembly, in plastids the minimal PEP RNA polymerase catalytic core is composed of four subunits: alpha, beta, beta', and beta''. When a (nuclear-encoded) sigma factor is associated with the core the holoenzyme is formed, which can initiate transcription.

It localises to the plastid. The protein localises to the chloroplast. It carries out the reaction RNA(n) + a ribonucleoside 5'-triphosphate = RNA(n+1) + diphosphate. Functionally, DNA-dependent RNA polymerase catalyzes the transcription of DNA into RNA using the four ribonucleoside triphosphates as substrates. The chain is DNA-directed RNA polymerase subunit alpha (rpoA) from Oltmannsiellopsis viridis (Marine flagellate).